We begin with the raw amino-acid sequence, 121 residues long: RxLR effector protein PexRD2 (121 aa).

The signal sequence occupies residues 1-18 (MRLSYVFVVFAASLLVTA). A RxLR-dEER motif is present at residues 38–56 (RLLRKHYTAAENDGDSEAR). A WY domain region spans residues 57 to 121 (ALNPEKMKTM…LNYVAEHTAV (65 aa)).

This sequence belongs to the RxLR effector family.

The protein resides in the secreted. Its subcellular location is the host cytoplasm. It localises to the host nucleus. In terms of biological role, secreted effector involved in P.mirabilis colonization of host plants. May perturb the signaling of cell death associated with plant immunity, via interaction with a host MAP kinase. This is RxLR effector protein PexRD2 from Phytophthora mirabilis.